A 355-amino-acid polypeptide reads, in one-letter code: uncharacterized protein (355 aa).

The transit peptide at 1–49 (MPMTVVSGRFSTALLPTCFSLSRLHSVKYAAQRRVVFVSRSAHASSASV) directs the protein to the chloroplast.

Belongs to the methyltransferase superfamily.

Its subcellular location is the plastid. The protein resides in the chloroplast. It is found in the plastoglobule. This is an uncharacterized protein from Arabidopsis thaliana (Mouse-ear cress).